Here is a 749-residue protein sequence, read N- to C-terminus: NAD(P)H-quinone oxidoreductase subunit 5, chloroplastic (749 aa).

17 helical membrane passes run 9–29 (WIIPFLPLPVPMLIGLGLLLF), 40–60 (WAFQSVLLLSIVMIFSMNLSI), 89–109 (IDPLTSIMLILITTVGIMVLI), 125–145 (FAYMSFFSTSMLGLVTSSNLI), 147–167 (IYIFWELVGICSYLLIGFWFT), 185–205 (GDFGLLLGILGFYWITGSFEF), 219–239 (NEVNFVFVTLCAVLLFAGAVA), 258–278 (TPISALIHAATMVAAGIFLVA), 290–312 (IMNFISLIGIITVFLGATLALAQ), 327–347 (LGYMMLALGMGSYRSALFHLI), 354–374 (ALLFLGSGSVIHSMETLVGYC), 396–416 (TSFLLGTLSLCGIPPLACFWS), 425–445 (WLYSPIFAIIAWSTAGLTAFY), 549–569 (LFPILILILFTLFVGFLGIPF), 608–628 (VFSVSIASFGIFIAFFLYKPV), 694–714 (IIDGIPNGVCLISFFVAEVIK), and 725–745 (LFFYFSYVSIFLLIYYFLNVF).

This sequence belongs to the complex I subunit 5 family. In terms of assembly, NDH is composed of at least 16 different subunits, 5 of which are encoded in the nucleus.

Its subcellular location is the plastid. The protein resides in the chloroplast thylakoid membrane. It catalyses the reaction a plastoquinone + NADH + (n+1) H(+)(in) = a plastoquinol + NAD(+) + n H(+)(out). The enzyme catalyses a plastoquinone + NADPH + (n+1) H(+)(in) = a plastoquinol + NADP(+) + n H(+)(out). Functionally, NDH shuttles electrons from NAD(P)H:plastoquinone, via FMN and iron-sulfur (Fe-S) centers, to quinones in the photosynthetic chain and possibly in a chloroplast respiratory chain. The immediate electron acceptor for the enzyme in this species is believed to be plastoquinone. Couples the redox reaction to proton translocation, and thus conserves the redox energy in a proton gradient. The chain is NAD(P)H-quinone oxidoreductase subunit 5, chloroplastic (ndhF) from Atractylodes lancea (Atractylodes japonica).